A 73-amino-acid chain; its full sequence is Conotoxin Asp7/Gla(3)-TxVI (73 aa).

The signal sequence occupies residues 1–19 (MQKLIILLLVAAVLMSTQA). The propeptide occupies 20–44 (VLQEKRPKEKIKFLSKRKTDAEKQQ). 3 disulfide bridges follow: C48–C62, C55–C66, and C61–C71. 4-hydroxyproline occurs at positions 49 and 54. E60 is subject to 4-carboxyglutamate. Position 64 is a 6'-bromotryptophan (W64).

In terms of tissue distribution, expressed by the venom duct.

Its subcellular location is the secreted. The chain is Conotoxin Asp7/Gla(3)-TxVI from Conus textile (Cloth-of-gold cone).